Reading from the N-terminus, the 317-residue chain is Aspartate carbamoyltransferase catalytic subunit (317 aa).

Carbamoyl phosphate contacts are provided by R66 and T67. K94 contributes to the L-aspartate binding site. Residues R116, H144, and Q147 each coordinate carbamoyl phosphate. R177 and R231 together coordinate L-aspartate. Carbamoyl phosphate contacts are provided by G272 and P273.

Belongs to the aspartate/ornithine carbamoyltransferase superfamily. ATCase family. Heterododecamer (2C3:3R2) of six catalytic PyrB chains organized as two trimers (C3), and six regulatory PyrI chains organized as three dimers (R2).

The enzyme catalyses carbamoyl phosphate + L-aspartate = N-carbamoyl-L-aspartate + phosphate + H(+). It functions in the pathway pyrimidine metabolism; UMP biosynthesis via de novo pathway; (S)-dihydroorotate from bicarbonate: step 2/3. Its function is as follows. Catalyzes the condensation of carbamoyl phosphate and aspartate to form carbamoyl aspartate and inorganic phosphate, the committed step in the de novo pyrimidine nucleotide biosynthesis pathway. The polypeptide is Aspartate carbamoyltransferase catalytic subunit (Bradyrhizobium sp. (strain BTAi1 / ATCC BAA-1182)).